A 100-amino-acid polypeptide reads, in one-letter code: UPF0213 protein YhbQ (100 aa).

The GIY-YIG domain occupies 2 to 77; sequence TPWFLYLIRT…KQLTKRQKER (76 aa).

The protein belongs to the UPF0213 family.

The chain is UPF0213 protein YhbQ from Escherichia coli O127:H6 (strain E2348/69 / EPEC).